Reading from the N-terminus, the 88-residue chain is Large ribosomal subunit protein bL27 (88 aa).

Residues 1-24 (MAHKKAGGSSRNGRDSEGRRLGVK) form a disordered region.

It belongs to the bacterial ribosomal protein bL27 family.

The polypeptide is Large ribosomal subunit protein bL27 (Methylobacterium radiotolerans (strain ATCC 27329 / DSM 1819 / JCM 2831 / NBRC 15690 / NCIMB 10815 / 0-1)).